Consider the following 182-residue polypeptide: Nascent polypeptide-associated complex subunit alpha (182 aa).

The region spanning 17–81 is the NAC-A/B domain; sequence NKNEKKAKEL…AKVDDMNQRI (65 aa). A disordered region spans residues 120–148; it reads ASLQGGESNADAAEDDNEEVDETGINPKD. The segment covering 131–141 has biased composition (acidic residues); that stretch reads AAEDDNEEVDE. One can recognise a UBA domain in the interval 144-182; it reads INPKDIDLIVEQTRVSRGSAVKALKKHDGDMVNALMELS.

It belongs to the NAC-alpha family. In terms of assembly, part of the nascent polypeptide-associated complex (NAC), consisting of EGD2 and EGD1. NAC associates with ribosomes via EGD1.

The protein resides in the cytoplasm. It localises to the nucleus. Component of the nascent polypeptide-associated complex (NAC), a dynamic component of the ribosomal exit tunnel, protecting the emerging polypeptides from interaction with other cytoplasmic proteins to ensure appropriate nascent protein targeting. The NAC complex also promotes mitochondrial protein import by enhancing productive ribosome interactions with the outer mitochondrial membrane and blocks the inappropriate interaction of ribosomes translating non-secretory nascent polypeptides with translocation sites in the membrane of the endoplasmic reticulum. EGD2 may also be involved in transcription regulation. The polypeptide is Nascent polypeptide-associated complex subunit alpha (EGD2) (Lodderomyces elongisporus (strain ATCC 11503 / CBS 2605 / JCM 1781 / NBRC 1676 / NRRL YB-4239) (Yeast)).